We begin with the raw amino-acid sequence, 204 residues long: MTPPGRLYLLRVCSTPPLLLLGLLLALPLEAQGLRGIGLTPSAAQPAHQQLPTPFTRGTLKPAAHLVGDPSTQDSLRWRANTDRAFLRHGFSLSNNSLLVPTSGLYFVYSQVVFSGRGCFPRATPTPLYLAHEVQLFSPQYPFHVPLLSAQKSVCPGPQGPWVRSVYQGAVFLLTRGDQLSTHTDGISHLLLSPSSVFFGAFAL.

The first 33 residues, 1 to 33 (MTPPGRLYLLRVCSTPPLLLLGLLLALPLEAQG), serve as a signal peptide directing secretion. In terms of domain architecture, THD spans 62 to 204 (PAAHLVGDPS…SSVFFGAFAL (143 aa)). Residue Asn95 is glycosylated (N-linked (GlcNAc...) asparagine). Cysteines 119 and 155 form a disulfide.

It belongs to the tumor necrosis factor family. As to quaternary structure, homotrimer, and heterotrimer of either two LTB and one LTA subunits or (less prevalent) two LTA and one LTB subunits. Interacts with TNFRSF14.

The protein resides in the secreted. It is found in the membrane. Cytokine that in its homotrimeric form binds to TNFRSF1A/TNFR1, TNFRSF1B/TNFBR and TNFRSF14/HVEM. In its heterotrimeric form with LTB binds to TNFRSF3/LTBR. Lymphotoxin is produced by lymphocytes and is cytotoxic for a wide range of tumor cells in vitro and in vivo. In Bos taurus (Bovine), this protein is Lymphotoxin-alpha (LTA).